A 146-amino-acid polypeptide reads, in one-letter code: Large ribosomal subunit protein bL9 (146 aa).

It belongs to the bacterial ribosomal protein bL9 family.

Its function is as follows. Binds to the 23S rRNA. The sequence is that of Large ribosomal subunit protein bL9 from Deinococcus deserti (strain DSM 17065 / CIP 109153 / LMG 22923 / VCD115).